The primary structure comprises 346 residues: Transposase for insertion sequence element IS1533 (346 aa).

It belongs to the transposase IS1111A/IS1328/IS1533 family.

Its function is as follows. Required for the transposition of the insertion element. The protein is Transposase for insertion sequence element IS1533 (tnhA) of Leptospira borgpetersenii.